Here is a 70-residue protein sequence, read N- to C-terminus: Peptide Hp1035 (70 aa).

Residues 1–23 form the signal peptide; sequence MKTQFVILLVALVLFQMFAQSEA. Phenylalanine 36 carries the phenylalanine amide modification. Positions 40–70 are excised as a propeptide; it reads GLQDLDMDDLDQLFDGEISQADINFLNQLMR.

It belongs to the non-disulfide-bridged peptide (NDBP) superfamily. Short antimicrobial peptide (group 4) family. As to expression, expressed by the venom gland.

It localises to the secreted. Its subcellular location is the target cell membrane. Amphipathic peptide with antimicrobial activity. This is Peptide Hp1035 from Heterometrus petersii (Asian forest scorpion).